The sequence spans 1502 residues: Rho GTPase-activating protein 5 (1502 aa).

FF domains follow at residues 267 to 325 (QLVV…HIEQ), 366 to 420 (KLME…HVQH), 427 to 481 (RVEM…HQRE), and 482 to 548 (IVEK…HIGF). A 3'-nitrotyrosine modification is found at Tyr-550. A phosphoserine mark is found at Ser-590 and Ser-765. The pG1 pseudoGTPase domain occupies 590–763 (STNIDKVNLF…LESVKHNLDV (174 aa)). A pG2 pseudoGTPase domain is found at 779–944 (RIVMCAMCGD…FSDVLEKKNM (166 aa)). 2 positions are modified to phosphoserine: Ser-951 and Ser-968. Disordered regions lie at residues 975 to 1004 (YNNYPDSDDDTEAPPPYSPIGDDVQLLPTP), 1022 to 1050 (HSTPNCHDHERNHKVPPPIKPKPVVPKTN), and 1069 to 1089 (NPRKQTSRVPLAHPEDMDPSD). Over residues 1036 to 1045 (VPPPIKPKPV) the composition is skewed to pro residues. Ser-1115 is subject to Phosphoserine. 2 disordered regions span residues 1125-1156 (FVNNTQGDEENGFSDRTSKSHGERRPSKYKYK) and 1168-1254 (YRRT…TRRN). Residues 1140-1150 (RTSKSHGERRP) are compositionally biased toward basic and acidic residues. Ser-1173, Ser-1176, Ser-1195, Ser-1202, and Ser-1218 each carry phosphoserine. Residues 1262-1449 (MPLQDLVTAE…TFIQQCQFFF (188 aa)) enclose the Rho-GAP domain.

As to quaternary structure, may interact with RASA1/p120GAP. As to expression, detected in skin fibroblasts (at protein level).

It localises to the cytoplasm. The protein resides in the cell membrane. Functionally, GTPase-activating protein for Rho family members. The chain is Rho GTPase-activating protein 5 (ARHGAP5) from Homo sapiens (Human).